The following is a 494-amino-acid chain: Glutamyl-tRNA(Gln) amidotransferase subunit A, mitochondrial (494 aa).

Residues lysine 79 and serine 160 each act as charge relay system in the active site. Serine 184 functions as the Acyl-ester intermediate in the catalytic mechanism.

Belongs to the amidase family. GatA subfamily. Subunit of the heterotrimeric GatCAB amidotransferase (AdT) complex, composed of A, B and C subunits.

It is found in the mitochondrion. It carries out the reaction L-glutamyl-tRNA(Gln) + L-glutamine + ATP + H2O = L-glutaminyl-tRNA(Gln) + L-glutamate + ADP + phosphate + H(+). Functionally, allows the formation of correctly charged Gln-tRNA(Gln) through the transamidation of misacylated Glu-tRNA(Gln) in the mitochondria. The reaction takes place in the presence of glutamine and ATP through an activated gamma-phospho-Glu-tRNA(Gln). The sequence is that of Glutamyl-tRNA(Gln) amidotransferase subunit A, mitochondrial from Aedes aegypti (Yellowfever mosquito).